The chain runs to 327 residues: Aspartate--ammonia ligase (327 aa).

This sequence belongs to the class-II aminoacyl-tRNA synthetase family. AsnA subfamily.

The protein resides in the cytoplasm. It catalyses the reaction L-aspartate + NH4(+) + ATP = L-asparagine + AMP + diphosphate + H(+). It functions in the pathway amino-acid biosynthesis; L-asparagine biosynthesis; L-asparagine from L-aspartate (ammonia route): step 1/1. This is Aspartate--ammonia ligase from Bacillus cereus (strain ATCC 10987 / NRS 248).